Reading from the N-terminus, the 236-residue chain is Potassium/proton antiporter CemA (236 aa).

The next 4 helical transmembrane spans lie at 12–32 (TVTSIKYFISFILFVLITNHV), 114–134 (IANVFADLLSLCIFVLALLLG), 161–181 (IILFTDIFVGFHSSHGWEILI), and 196–216 (FIFLFVATFPVVLDTVFKYWI).

This sequence belongs to the CemA family.

Its subcellular location is the plastid. It is found in the chloroplast inner membrane. The enzyme catalyses K(+)(in) + H(+)(out) = K(+)(out) + H(+)(in). Contributes to K(+)/H(+) antiport activity by supporting proton efflux to control proton extrusion and homeostasis in chloroplasts in a light-dependent manner to modulate photosynthesis. Prevents excessive induction of non-photochemical quenching (NPQ) under continuous-light conditions. Indirectly promotes efficient inorganic carbon uptake into chloroplasts. The protein is Potassium/proton antiporter CemA of Chlorokybus atmophyticus (Soil alga).